The primary structure comprises 692 residues: Elongation factor G (692 aa).

The 276-residue stretch at 8 to 283 (KNTRNIGIMA…AVVDYLPSPV (276 aa)) folds into the tr-type G domain. Residues 17 to 24 (AHIDAGKT), 81 to 85 (DTPGH), and 135 to 138 (NKMD) contribute to the GTP site.

It belongs to the TRAFAC class translation factor GTPase superfamily. Classic translation factor GTPase family. EF-G/EF-2 subfamily.

It is found in the cytoplasm. Catalyzes the GTP-dependent ribosomal translocation step during translation elongation. During this step, the ribosome changes from the pre-translocational (PRE) to the post-translocational (POST) state as the newly formed A-site-bound peptidyl-tRNA and P-site-bound deacylated tRNA move to the P and E sites, respectively. Catalyzes the coordinated movement of the two tRNA molecules, the mRNA and conformational changes in the ribosome. The protein is Elongation factor G of Exiguobacterium sp. (strain ATCC BAA-1283 / AT1b).